The chain runs to 191 residues: Glutathione S-transferase Y-2 (191 aa).

One can recognise a GST N-terminal domain in the interval 2 to 80 (TFATVYIKPH…YIVAKGSKPE (79 aa)). One can recognise a GST C-terminal domain in the interval 85 to 191 (TTEERATNTR…VSQHPIIKNM (107 aa)).

It belongs to the GST superfamily.

The enzyme catalyses RX + glutathione = an S-substituted glutathione + a halide anion + H(+). Functionally, conjugation of reduced glutathione to a wide number of exogenous and endogenous hydrophobic electrophiles. The polypeptide is Glutathione S-transferase Y-2 (GSTY2) (Pichia kudriavzevii (Yeast)).